The primary structure comprises 92 residues: Non-specific lipid-transfer protein B (92 aa).

Disulfide bonds link cysteine 3/cysteine 51, cysteine 13/cysteine 28, cysteine 29/cysteine 74, and cysteine 49/cysteine 88.

Belongs to the plant LTP family.

Plant non-specific lipid-transfer proteins transfer phospholipids as well as galactolipids across membranes. May play a role in wax or cutin deposition in the cell walls of expanding epidermal cells and certain secretory tissues. The sequence is that of Non-specific lipid-transfer protein B from Ricinus communis (Castor bean).